Consider the following 86-residue polypeptide: Large ribosomal subunit protein bL27 (86 aa).

It belongs to the bacterial ribosomal protein bL27 family.

The protein is Large ribosomal subunit protein bL27 of Xanthomonas oryzae pv. oryzae (strain PXO99A).